Consider the following 129-residue polypeptide: Small ribosomal subunit protein uS11 (129 aa).

It belongs to the universal ribosomal protein uS11 family. As to quaternary structure, part of the 30S ribosomal subunit. Interacts with proteins S7 and S18. Binds to IF-3.

In terms of biological role, located on the platform of the 30S subunit, it bridges several disparate RNA helices of the 16S rRNA. Forms part of the Shine-Dalgarno cleft in the 70S ribosome. The chain is Small ribosomal subunit protein uS11 from Cereibacter sphaeroides (strain ATCC 17029 / ATH 2.4.9) (Rhodobacter sphaeroides).